The chain runs to 303 residues: Ferrochelatase (303 aa).

Fe cation contacts are provided by His-185 and Glu-262.

Belongs to the ferrochelatase family.

The protein localises to the cytoplasm. The enzyme catalyses heme b + 2 H(+) = protoporphyrin IX + Fe(2+). It functions in the pathway porphyrin-containing compound metabolism; protoheme biosynthesis; protoheme from protoporphyrin-IX: step 1/1. In terms of biological role, catalyzes the ferrous insertion into protoporphyrin IX. In Campylobacter jejuni subsp. doylei (strain ATCC BAA-1458 / RM4099 / 269.97), this protein is Ferrochelatase.